We begin with the raw amino-acid sequence, 270 residues long: tRNA pseudouridine synthase A (270 aa).

Asp52 serves as the catalytic Nucleophile. Tyr110 is a substrate binding site. Residues 251 to 270 (TGAADEPAAPHGVTETRMQL) form a disordered region.

It belongs to the tRNA pseudouridine synthase TruA family. As to quaternary structure, homodimer.

The catalysed reaction is uridine(38/39/40) in tRNA = pseudouridine(38/39/40) in tRNA. Formation of pseudouridine at positions 38, 39 and 40 in the anticodon stem and loop of transfer RNAs. This Roseiflexus sp. (strain RS-1) protein is tRNA pseudouridine synthase A.